Here is a 378-residue protein sequence, read N- to C-terminus: Acetylornithine deacetylase (378 aa).

His-76 contacts Zn(2+). The active site involves Asp-78. Residue Asp-108 coordinates Zn(2+). Glu-140 is an active-site residue. Residues Glu-141, Glu-165, and His-351 each coordinate Zn(2+).

Belongs to the peptidase M20A family. ArgE subfamily. In terms of assembly, homodimer. Zn(2+) is required as a cofactor. Requires Co(2+) as cofactor. It depends on glutathione as a cofactor.

It is found in the cytoplasm. The enzyme catalyses N(2)-acetyl-L-ornithine + H2O = L-ornithine + acetate. The protein operates within amino-acid biosynthesis; L-arginine biosynthesis; L-ornithine from N(2)-acetyl-L-ornithine (linear): step 1/1. Its function is as follows. Catalyzes the hydrolysis of the amide bond of N(2)-acetylated L-amino acids. Cleaves the acetyl group from N-acetyl-L-ornithine to form L-ornithine, an intermediate in L-arginine biosynthesis pathway, and a branchpoint in the synthesis of polyamines. In Vibrio parahaemolyticus serotype O3:K6 (strain RIMD 2210633), this protein is Acetylornithine deacetylase.